The chain runs to 102 residues: Protein translation factor SUI1 homolog (102 aa).

This sequence belongs to the SUI1 family.

The polypeptide is Protein translation factor SUI1 homolog (Nitrosopumilus maritimus (strain SCM1)).